The sequence spans 289 residues: MTETTDSVPEPPSDADQLQPKVSICGLDMPAEVSETAAEAAIGVSEPKKRSALWEFAILAVIAIGLYYVMLTFVARPYLIPSESMEPTLHGCSGCVGDRIMVDKITYRFSSPQPGDVIVFKGPPSWNTMYKSIRSNNIVLRSVQNALSFVGFVPPDENDLVKRVIAVGGQTVQCRSDTGLTVNGKPLKEPYLRPVTMNADLSFSPCLGSEFGPVTVPQGRLWVMGDNRIHSADSRYHCNSTDVVNGLSCTGDPNSGTVPVSNVIGKARVVVWPPSRWGGVGSVNSQQGQ.

The Cytoplasmic portion of the chain corresponds to Met1–Leu53. A helical transmembrane segment spans residues Trp54–Val74. At Ala75 to Gln289 the chain is on the extracellular side. Active-site residues include Ser84 and Lys162.

The protein belongs to the peptidase S26 family.

The protein resides in the cell membrane. The catalysed reaction is Cleavage of hydrophobic, N-terminal signal or leader sequences from secreted and periplasmic proteins.. The sequence is that of Probable signal peptidase I (lepB) from Mycobacterium leprae (strain TN).